A 313-amino-acid polypeptide reads, in one-letter code: Ribosomal RNA small subunit methyltransferase H (313 aa).

Residues 35-37 (GGH), aspartate 55, phenylalanine 81, aspartate 103, and glutamine 110 contribute to the S-adenosyl-L-methionine site.

The protein belongs to the methyltransferase superfamily. RsmH family.

It localises to the cytoplasm. The enzyme catalyses cytidine(1402) in 16S rRNA + S-adenosyl-L-methionine = N(4)-methylcytidine(1402) in 16S rRNA + S-adenosyl-L-homocysteine + H(+). In terms of biological role, specifically methylates the N4 position of cytidine in position 1402 (C1402) of 16S rRNA. This Pseudomonas syringae pv. syringae (strain B728a) protein is Ribosomal RNA small subunit methyltransferase H.